A 213-amino-acid chain; its full sequence is Superoxide dismutase [Mn] (213 aa).

Mn(2+) is bound by residues His-27, His-82, Asp-168, and His-172.

The protein belongs to the iron/manganese superoxide dismutase family. As to quaternary structure, homodimer.

The catalysed reaction is 2 superoxide + 2 H(+) = H2O2 + O2. With respect to regulation, inhibited by hydrogen peroxide. Destroys superoxide anion radicals which are normally produced within the cells and which are toxic to biological systems. This Haemophilus ducreyi (strain 35000HP / ATCC 700724) protein is Superoxide dismutase [Mn] (sodA).